The following is a 408-amino-acid chain: MNVEDIIEKVANGEIKLHQVEKYVNGDKRLATEIRRKALERKLGISLKHIGHYSIDPNELIGRNIENMIGVVQIPMGVAGPLKINGEYAKGEFYIPLATTEGALVASVNRGCSALTEAGGVVTTILDDKMTRAPLIRCPNARRAREVAEWVKENLNYLQEKAVAKVTRHGKLRDVKPFIVGNNLYLRFEFETGDAMGMNMVTIASEEIMKVIEEEFPDVRYLALSGNLCVDKKPNAVNFILGRGKTVVAEAIVPREIVEKKLKTTPELIAEVNYFKNLVGSAQAGSYGFNAHFGNIVGAIFLATGQDEAQITEGSHGITIAEVTPEGDLYISITMPSLEIGTVGGGTRVPTQREALSIMGVAGGGDPPGVNAKKFAEIVAGAVLAGELSLLAAIAAKHLARAHKMLGR.

Active-site charge relay system residues include glutamate 101 and aspartate 307. Histidine 403 acts as the Proton donor in catalysis.

This sequence belongs to the HMG-CoA reductase family.

The enzyme catalyses (R)-mevalonate + 2 NADP(+) + CoA = (3S)-3-hydroxy-3-methylglutaryl-CoA + 2 NADPH + 2 H(+). It functions in the pathway metabolic intermediate biosynthesis; (R)-mevalonate biosynthesis; (R)-mevalonate from acetyl-CoA: step 3/3. Functionally, converts HMG-CoA to mevalonate. In Pyrococcus abyssi (strain GE5 / Orsay), this protein is 3-hydroxy-3-methylglutaryl-coenzyme A reductase (hmgA).